Consider the following 108-residue polypeptide: Large ribosomal subunit protein bL21 (108 aa).

This sequence belongs to the bacterial ribosomal protein bL21 family. As to quaternary structure, part of the 50S ribosomal subunit. Contacts protein L20.

This protein binds to 23S rRNA in the presence of protein L20. This chain is Large ribosomal subunit protein bL21, found in Acidobacterium capsulatum (strain ATCC 51196 / DSM 11244 / BCRC 80197 / JCM 7670 / NBRC 15755 / NCIMB 13165 / 161).